The sequence spans 192 residues: Der GTPase-activating protein YihI (192 aa).

A compositionally biased stretch (basic residues) spans Met-1–Gly-12. 2 disordered regions span residues Met-1–Lys-87 and Asp-145–Lys-192. Over residues Lys-13 to Glu-26 the composition is skewed to basic and acidic residues. Positions Arg-27–Leu-36 are enriched in basic residues. Acidic residues predominate over residues Asp-145 to Leu-172. Positions Pro-183–Lys-192 are enriched in basic and acidic residues.

This sequence belongs to the YihI family. As to quaternary structure, interacts with Der.

A GTPase-activating protein (GAP) that modifies Der/EngA GTPase function. May play a role in ribosome biogenesis. This chain is Der GTPase-activating protein YihI, found in Aeromonas hydrophila subsp. hydrophila (strain ATCC 7966 / DSM 30187 / BCRC 13018 / CCUG 14551 / JCM 1027 / KCTC 2358 / NCIMB 9240 / NCTC 8049).